The chain runs to 397 residues: GTPase Obg (397 aa).

An Obg domain is found at 1–159; that stretch reads MKFVDEATII…RNLRLELKVL (159 aa). The disordered stretch occupies residues 128 to 148; sequence TRFKSSVNRAPRQTSKGSEGE. Residues 129–144 show a composition bias toward polar residues; that stretch reads RFKSSVNRAPRQTSKG. An OBG-type G domain is found at 160-333; that stretch reads ADVGLLGLPN…LVQAVMRWIE (174 aa). GTP-binding positions include 166-173, 191-195, 213-216, 283-286, and 314-316; these read GLPNAGKS, FTTLV, DIPG, NKVD, and SAL. Mg(2+)-binding residues include Ser-173 and Thr-193. Positions 336–347 are enriched in acidic residues; sequence AEQEADNPDFAE. Residues 336 to 397 are disordered; that stretch reads AEQEADNPDF…YDVEVVYAPE (62 aa). Positions 349–370 are enriched in basic and acidic residues; it reads EAARRRRMDEEARQKIEADRQA. Over residues 378–390 the composition is skewed to acidic residues; that stretch reads DDDDDFDDDDYDV.

Belongs to the TRAFAC class OBG-HflX-like GTPase superfamily. OBG GTPase family. As to quaternary structure, monomer. Mg(2+) is required as a cofactor.

The protein localises to the cytoplasm. In terms of biological role, an essential GTPase which binds GTP, GDP and possibly (p)ppGpp with moderate affinity, with high nucleotide exchange rates and a fairly low GTP hydrolysis rate. Plays a role in control of the cell cycle, stress response, ribosome biogenesis and in those bacteria that undergo differentiation, in morphogenesis control. In Marinobacter nauticus (strain ATCC 700491 / DSM 11845 / VT8) (Marinobacter aquaeolei), this protein is GTPase Obg.